Reading from the N-terminus, the 446-residue chain is Homocitrate synthase, mitochondrial (446 aa).

Positions 1–14 are enriched in low complexity; the sequence is MCATDNAPAANAAP. A disordered region spans residues 1–36; it reads MCATDNAPAANAAPEKPSNVGVEVGHTGEQTNPYGA. The region spanning 48–307 is the Pyruvate carboxyltransferase domain; the sequence is FQLIESTLRE…HKLRDLENLV (260 aa). Arg-56 is a binding site for 2-oxoglutarate. Glu-57 lines the Mg(2+) pocket. 2-oxoglutarate-binding residues include His-116, Arg-176, and Thr-210. Mg(2+)-binding residues include His-237 and His-239. The Proton acceptor role is filled by His-334. Residues 422 to 446 are disordered; sequence TPTVAATEGPAVEDEPAAKKAKTEE. A compositionally biased stretch (basic and acidic residues) spans 437–446; it reads PAAKKAKTEE.

The protein belongs to the alpha-IPM synthase/homocitrate synthase family. Homocitrate synthase LYS20/LYS21 subfamily. Requires Mg(2+) as cofactor. Mn(2+) is required as a cofactor.

Its subcellular location is the mitochondrion. The catalysed reaction is acetyl-CoA + 2-oxoglutarate + H2O = (2R)-homocitrate + CoA + H(+). The protein operates within amino-acid biosynthesis; L-lysine biosynthesis via AAA pathway; L-alpha-aminoadipate from 2-oxoglutarate: step 1/5. Catalyzes the aldol-type condensation of 2-oxoglutarate with acetyl-CoA to yield homocitrate. Carries out the first step of the alpha-aminoadipate (AAA) lysine biosynthesis pathway. The chain is Homocitrate synthase, mitochondrial (LYS1) from Yarrowia lipolytica (strain CLIB 122 / E 150) (Yeast).